A 70-amino-acid polypeptide reads, in one-letter code: uncharacterized protein (70 aa).

This is an uncharacterized protein from Escherichia coli O157:H7.